Here is a 507-residue protein sequence, read N- to C-terminus: Putative UDP-glucuronosyltransferase ugt-60 (507 aa).

An N-terminal signal peptide occupies residues 1 to 15 (MYLPIFCIFLSVVDS). Asn312 carries an N-linked (GlcNAc...) asparagine glycan. The helical transmembrane segment at 379-399 (YNSFLEAAQAGIPAVLMPLFA) threads the bilayer.

Belongs to the UDP-glycosyltransferase family.

Its subcellular location is the membrane. The catalysed reaction is glucuronate acceptor + UDP-alpha-D-glucuronate = acceptor beta-D-glucuronoside + UDP + H(+). The polypeptide is Putative UDP-glucuronosyltransferase ugt-60 (ugt-60) (Caenorhabditis elegans).